Reading from the N-terminus, the 257-residue chain is Imidazole glycerol phosphate synthase subunit HisF (257 aa).

Catalysis depends on residues Asp11 and Asp130.

The protein belongs to the HisA/HisF family. Heterodimer of HisH and HisF.

It is found in the cytoplasm. It catalyses the reaction 5-[(5-phospho-1-deoxy-D-ribulos-1-ylimino)methylamino]-1-(5-phospho-beta-D-ribosyl)imidazole-4-carboxamide + L-glutamine = D-erythro-1-(imidazol-4-yl)glycerol 3-phosphate + 5-amino-1-(5-phospho-beta-D-ribosyl)imidazole-4-carboxamide + L-glutamate + H(+). Its pathway is amino-acid biosynthesis; L-histidine biosynthesis; L-histidine from 5-phospho-alpha-D-ribose 1-diphosphate: step 5/9. In terms of biological role, IGPS catalyzes the conversion of PRFAR and glutamine to IGP, AICAR and glutamate. The HisF subunit catalyzes the cyclization activity that produces IGP and AICAR from PRFAR using the ammonia provided by the HisH subunit. The chain is Imidazole glycerol phosphate synthase subunit HisF from Aliivibrio salmonicida (strain LFI1238) (Vibrio salmonicida (strain LFI1238)).